The chain runs to 38 residues: Photosystem II reaction center protein L (38 aa).

The helical transmembrane segment at 17–37 (SLYWGLLLIFVLAVLFSSYIF) threads the bilayer.

It belongs to the PsbL family. In terms of assembly, PSII is composed of 1 copy each of membrane proteins PsbA, PsbB, PsbC, PsbD, PsbE, PsbF, PsbH, PsbI, PsbJ, PsbK, PsbL, PsbM, PsbT, PsbY, PsbZ, Psb30/Ycf12, at least 3 peripheral proteins of the oxygen-evolving complex and a large number of cofactors. It forms dimeric complexes.

The protein localises to the plastid. It is found in the chloroplast thylakoid membrane. Its function is as follows. One of the components of the core complex of photosystem II (PSII). PSII is a light-driven water:plastoquinone oxidoreductase that uses light energy to abstract electrons from H(2)O, generating O(2) and a proton gradient subsequently used for ATP formation. It consists of a core antenna complex that captures photons, and an electron transfer chain that converts photonic excitation into a charge separation. This subunit is found at the monomer-monomer interface and is required for correct PSII assembly and/or dimerization. The polypeptide is Photosystem II reaction center protein L (Euglena gracilis).